The primary structure comprises 341 residues: Glucokinase (341 aa).

18–23 (GDIGGT) is a binding site for ATP.

This sequence belongs to the bacterial glucokinase family.

The protein localises to the cytoplasm. It catalyses the reaction D-glucose + ATP = D-glucose 6-phosphate + ADP + H(+). The sequence is that of Glucokinase from Mesorhizobium japonicum (strain LMG 29417 / CECT 9101 / MAFF 303099) (Mesorhizobium loti (strain MAFF 303099)).